A 161-amino-acid chain; its full sequence is SsrA-binding protein (161 aa).

The tract at residues 140–161 (KRESIKERDWKRDKQRLLKDRG) is disordered.

It belongs to the SmpB family.

The protein resides in the cytoplasm. Functionally, required for rescue of stalled ribosomes mediated by trans-translation. Binds to transfer-messenger RNA (tmRNA), required for stable association of tmRNA with ribosomes. tmRNA and SmpB together mimic tRNA shape, replacing the anticodon stem-loop with SmpB. tmRNA is encoded by the ssrA gene; the 2 termini fold to resemble tRNA(Ala) and it encodes a 'tag peptide', a short internal open reading frame. During trans-translation Ala-aminoacylated tmRNA acts like a tRNA, entering the A-site of stalled ribosomes, displacing the stalled mRNA. The ribosome then switches to translate the ORF on the tmRNA; the nascent peptide is terminated with the 'tag peptide' encoded by the tmRNA and targeted for degradation. The ribosome is freed to recommence translation, which seems to be the essential function of trans-translation. The protein is SsrA-binding protein of Sphingopyxis alaskensis (strain DSM 13593 / LMG 18877 / RB2256) (Sphingomonas alaskensis).